The chain runs to 210 residues: Chaperone protein TorD (210 aa).

Belongs to the TorD/DmsD family. TorD subfamily.

It is found in the cytoplasm. Its function is as follows. Involved in the biogenesis of TorA. Acts on TorA before the insertion of the molybdenum cofactor and, as a result, probably favors a conformation of the apoenzyme that is competent for acquiring the cofactor. This chain is Chaperone protein TorD, found in Salmonella agona (strain SL483).